Here is a 644-residue protein sequence, read N- to C-terminus: ATP-dependent zinc metalloprotease FtsH (644 aa).

Residues 1–13 lie on the Cytoplasmic side of the membrane; that stretch reads MANNDNKHRRSMS. Residues 14–34 form a helical membrane-spanning segment; sequence MLLYIAVAIFVYLLLSNTLLP. Residues 35–117 are Extracellular-facing; the sequence is GLLRQQIQTV…SIPDNSANML (83 aa). A helical transmembrane segment spans residues 118–138; that stretch reads MYALIQYGIPLIIFLGIGFFI. Residues 139–644 lie on the Cytoplasmic side of the membrane; the sequence is NRSLKRAMGD…DEGSSTPSEE (506 aa). 224 to 231 contacts ATP; the sequence is GPPGTGKT. His-445 is a binding site for Zn(2+). Residue Glu-446 is part of the active site. The Zn(2+) site is built by His-449 and Asp-522.

This sequence in the central section; belongs to the AAA ATPase family. It in the C-terminal section; belongs to the peptidase M41 family. Homohexamer. Zn(2+) serves as cofactor.

Its subcellular location is the cell membrane. Acts as a processive, ATP-dependent zinc metallopeptidase for both cytoplasmic and membrane proteins. Plays a role in the quality control of integral membrane proteins. In Lancefieldella parvula (strain ATCC 33793 / DSM 20469 / CCUG 32760 / JCM 10300 / KCTC 3663 / VPI 0546 / 1246) (Atopobium parvulum), this protein is ATP-dependent zinc metalloprotease FtsH.